The following is a 602-amino-acid chain: MAADTTTLTTDCLFARTRVQVCDALRSVVPGLPEEVVQRVDLTPTRDPSHGDMATNAAMLAAKPARRKPAEIAAELVDKLFALPEVAKAEAAGPGFVNLTLKPEVLQGVAVSILKAGDQYGRSTMGQGTRVNVEYVSANPTGPMHVGHCRGAVVGDALANLLEAAGNTVTREYYINDAGTQVVALTWATYWRYLQVIGTEISADDFSPLTPNGLQYQGEYLIPVAQSIADKHGRALANADGGPADPSVWFETVRREALTQMMAAIREDLEALGISHEVFASEAETLASGRVDAAIAKLDSKGLLYEGVLEPPKGKMPEDWEARPQTLFRSTEFGDDQDRALRKSDGTNTYFANDIGYHAQKAENADVLIDVLGADHGGYVSRMRAAISALTDGKTGFEVVMCQIVRVVKNGEPVRMSKRAGTFVTLRDLLDEVGRDAVRFTMLTRKADAQMEFDLDAVVAQTRDNPVFYVQYAHARCRSVLRSAETMFGADTVTPEALCSADLSNLSSDVELAVLRRLAAFPRSVEAAATAREPHRIATYCIDLASDFHALWNRGREDTTLRFLHENDRATSLAKLALVSAIAGTLRCALTILGVVPVEEMR.

Positions 138 to 148 (ANPTGPMHVGH) match the 'HIGH' region motif.

This sequence belongs to the class-I aminoacyl-tRNA synthetase family. As to quaternary structure, monomer.

It is found in the cytoplasm. The catalysed reaction is tRNA(Arg) + L-arginine + ATP = L-arginyl-tRNA(Arg) + AMP + diphosphate. This chain is Arginine--tRNA ligase, found in Gluconobacter oxydans (strain 621H) (Gluconobacter suboxydans).